The primary structure comprises 177 residues: uncharacterized protein (177 aa).

It is found in the plastid. The protein localises to the chloroplast. This is an uncharacterized protein from Chlorella vulgaris (Green alga).